A 215-amino-acid chain; its full sequence is Redox-sensing transcriptional repressor Rex (215 aa).

Residues 18 to 57 (LYYRFLKNLHASGKQRVSSAELSDAVKVDSATIRRDFSYF) constitute a DNA-binding region (H-T-H motif). Position 92–97 (92–97 (GVGNLG)) interacts with NAD(+).

It belongs to the transcriptional regulatory Rex family. As to quaternary structure, homodimer.

It localises to the cytoplasm. Modulates transcription in response to changes in cellular NADH/NAD(+) redox state. The chain is Redox-sensing transcriptional repressor Rex from Bacillus subtilis (strain 168).